The primary structure comprises 192 residues: Thymidine kinase (192 aa).

Residues 9–16 and 87–90 contribute to the ATP site; these read SAMNAGKS and DECQ. E88 functions as the Proton acceptor in the catalytic mechanism. C145, C147, C182, and H185 together coordinate Zn(2+).

It belongs to the thymidine kinase family. In terms of assembly, homotetramer.

It localises to the cytoplasm. The enzyme catalyses thymidine + ATP = dTMP + ADP + H(+). The sequence is that of Thymidine kinase from Aliivibrio fischeri (strain ATCC 700601 / ES114) (Vibrio fischeri).